Here is a 179-residue protein sequence, read N- to C-terminus: Large ribosomal subunit protein uL5 (179 aa).

This sequence belongs to the universal ribosomal protein uL5 family. Part of the 50S ribosomal subunit; part of the 5S rRNA/L5/L18/L25 subcomplex. Contacts the 5S rRNA and the P site tRNA. Forms a bridge to the 30S subunit in the 70S ribosome.

Its function is as follows. This is one of the proteins that bind and probably mediate the attachment of the 5S RNA into the large ribosomal subunit, where it forms part of the central protuberance. In the 70S ribosome it contacts protein S13 of the 30S subunit (bridge B1b), connecting the 2 subunits; this bridge is implicated in subunit movement. Contacts the P site tRNA; the 5S rRNA and some of its associated proteins might help stabilize positioning of ribosome-bound tRNAs. This chain is Large ribosomal subunit protein uL5, found in Nitrosomonas eutropha (strain DSM 101675 / C91 / Nm57).